Reading from the N-terminus, the 254-residue chain is Membrane protein US20 (254 aa).

The next 7 membrane-spanning stretches (helical) occupy residues 31 to 51 (AIFI…WLGF), 62 to 82 (YSFF…YTLG), 89 to 109 (ATVL…FQMC), 114 to 134 (VLVG…GLAF), 143 to 163 (WKCI…LALL), 178 to 198 (AFSI…VIFF), and 208 to 228 (AVCL…MLSG).

Its subcellular location is the host membrane. The chain is Membrane protein US20 (US20) from Homo sapiens (Human).